The chain runs to 63 residues: Overexpressed in colon carcinoma 1 protein homolog (63 aa).

The segment covering 1–12 has biased composition (low complexity); the sequence is MGCGNSTAASAG. Positions 1–40 are disordered; that stretch reads MGCGNSTAASAGAGQGPAGAAKDVTEESITEDDKRRNYGG.

Belongs to the OCC1 family.

The sequence is that of Overexpressed in colon carcinoma 1 protein homolog from Bos taurus (Bovine).